The sequence spans 1491 residues: MSFSMRNGAHLIWIGLLVCCLVDMGASMEFTGAEGQWARFPMWNACCESEMSFNMKTKSAHGLLVYFDDEGFCDFLELLIHNGRLSLRFSIFCAEPATVFSDTAVNDSRWHAVTLRRNFKNTTLVVDEEIKWVEVKSKRRDMTVFSHLFLGGIPPELRSVALRLTSSAIKDEVPYKGWITNLRVNGSEPVLIGSDGVNSDICEADHICLNGGVCSIVNDEPICDCSETGFQGKDCSEEEAYVGGLAHLMMGDQGKRKEREEYMATFKGSEYFCYDLSPNPIQSSSDEITLSFKTLQRNGLMLHTGKSADYVNLALKNGAVSLVINLGSGAFEALVEPVNGKFNDNAWHDVKVTRNLRQHSGIGHAMVNKLHCSVTISVDGILTTTGYTQEDYTMLGSDDFFYVGGSPSTADLPGSPVSNNFMGCLKEVVYKNNDVRLELSRLAKLGDPKMKVSGVVAFKCENVATLDPVTFETPESFITLDKWSAKKAGSISFDFRTTEPNGLLLFSHGKPKPQQQKDPKSPKTLKVDFFAIEMLDGHLYLLLDMGSGTTKTRAVNKKVNDGEWYHVDFQRDGRSGTISVNSIRTPYNAPGESEILDLDDKLYLGGLPEDRAGLIFPTEVWTALLNYGYVGCVRDLFMDGQSKDIRRIAEAQRAVGVKPSCSKEPPKQCLSNPCLNSGTCREGWNRYVCDCSGTGYLGRSCERDATILSYDGSKFMKIQLPVVMHTEAEDVSLRFRSQRAYGVLMATTSQNSADTLRLELDGGRVRLTVNLDCIRINCTTSKGPETIFSGQNLNDNEWHTVRVVRRGKSLKLMVDDLQPSEGQITGDHTQLEFHNVETGIVTEKRYMPAVPSNFIGHLQGLSFNGMSYIDLCKNGDIDYCELNAMIGYRSIVADPVTFKSRSSYVTLPTLQAYYSMHLFFQFKTTSPDGLILYNRGDGNDFIVVELVKGYLHYVSDLGNGAHLIKGNSNTPLNDNHWHNVMISRDTNNLHTVKIDTKITTQTTMGAKNLDLKGDLYVGGVAKDMYKDLPKLVHSKEGFQGCLASVDLNGRLPDLQSDALSTAGQVERGCEGPSTTCQEDSCSNQGVCLQQWEGFSCDCSMTSYGGPLCNDPGTTYIFGRDGGLIVYTWPPNDRPSTRADRLAVGFSTQQKDAVLVRVDSSSGLGDYLQLQIERGNIKVVFNVGTDDINIEETSKFVNDGKYHIVRFTRSGGNATLQVDDLPVIERYPSGNIDNERLAIARQRIPYRLGRVVDDWLLDKGRQLTIFNSQTTIKIGGWEKGSRPFQGQLSGLYYNGLKVLNMAAEGDPNVRVEGSARLVGDMPSSSITPQSSVSAAGNRSETSPSITDITTTTASNRQGKQTTTPQDDLLVASAECPSDDEDIDPCDPSSGGLAHPPLPEAKGYPSPEVIRESSSTTGMVVGIVAAAALCILILLYAMYKYRNRDEGSYHVDESRNYISNSATQPNGAAVKEKPIGVPKNKKDKKNKDKEYYV.

The N-terminal stretch at 1 to 27 (MSFSMRNGAHLIWIGLLVCCLVDMGAS) is a signal peptide. The 181-residue stretch at 28–208 (MEFTGAEGQW…SDICEADHIC (181 aa)) folds into the Laminin G-like 1 domain. Over 28–1415 (MEFTGAEGQW…EVIRESSSTT (1388 aa)) the chain is Extracellular. In terms of domain architecture, EGF-like 1 spans 198 to 236 (NSDICEADHICLNGGVCSIVNDEPICDCSETGFQGKDCS). 3 cysteine pairs are disulfide-bonded: Cys202-Cys214, Cys208-Cys223, and Cys225-Cys235. Laminin G-like domains lie at 263 to 460 (MATF…AFKC) and 467 to 661 (DPVT…KPSC). Residues Asp309, Leu326, and Met394 each coordinate Ca(2+). Disulfide bonds link Cys424/Cys460, Cys632/Cys661, Cys669/Cys680, Cys674/Cys689, and Cys691/Cys701. One can recognise an EGF-like 2 domain in the interval 665–702 (PPKQCLSNPCLNSGTCREGWNRYVCDCSGTGYLGRSCE). Laminin G-like domains are found at residues 707–880 (ILSY…IDYC) and 894–1069 (DPVT…ERGC). Intrachain disulfides connect Cys1041–Cys1069, Cys1076–Cys1087, Cys1081–Cys1096, and Cys1098–Cys1108. The EGF-like 3 domain occupies 1072-1109 (PSTTCQEDSCSNQGVCLQQWEGFSCDCSMTSYGGPLCN). Residues 1113–1314 (TTYIFGRDGG…DPNVRVEGSA (202 aa)) enclose the Laminin G-like 6 domain. The interval 1318–1408 (GDMPSSSITP…AKGYPSPEVI (91 aa)) is disordered. Over residues 1322-1353 (SSSITPQSSVSAAGNRSETSPSITDITTTTAS) the composition is skewed to low complexity. Residues 1354 to 1364 (NRQGKQTTTPQ) are compositionally biased toward polar residues. The helical transmembrane segment at 1416–1436 (GMVVGIVAAAALCILILLYAM) threads the bilayer. Topologically, residues 1437-1491 (YKYRNRDEGSYHVDESRNYISNSATQPNGAAVKEKPIGVPKNKKDKKNKDKEYYV) are cytoplasmic. The interval 1457–1491 (SNSATQPNGAAVKEKPIGVPKNKKDKKNKDKEYYV) is disordered.

The protein belongs to the neurexin family.

It localises to the membrane. In terms of biological role, neuronal cell surface protein that may be involved in cell recognition and cell adhesion. The sequence is that of Neurexin-1a (nrxn1a) from Danio rerio (Zebrafish).